The chain runs to 119 residues: Large ribosomal subunit protein uL18 (119 aa).

The protein belongs to the universal ribosomal protein uL18 family. In terms of assembly, part of the 50S ribosomal subunit; part of the 5S rRNA/L5/L18/L25 subcomplex. Contacts the 5S and 23S rRNAs.

Its function is as follows. This is one of the proteins that bind and probably mediate the attachment of the 5S RNA into the large ribosomal subunit, where it forms part of the central protuberance. The sequence is that of Large ribosomal subunit protein uL18 from Clostridium botulinum (strain Loch Maree / Type A3).